Consider the following 197-residue polypeptide: Ribonuclease HII (197 aa).

The RNase H type-2 domain occupies 14-197 (GIIAGVDEVG…RKNFAPIRIL (184 aa)). 3 residues coordinate a divalent metal cation: D20, E21, and D112.

The protein belongs to the RNase HII family. It depends on Mn(2+) as a cofactor. Requires Mg(2+) as cofactor.

It localises to the cytoplasm. It carries out the reaction Endonucleolytic cleavage to 5'-phosphomonoester.. In terms of biological role, endonuclease that specifically degrades the RNA of RNA-DNA hybrids. This chain is Ribonuclease HII, found in Wolbachia pipientis subsp. Culex pipiens (strain wPip).